Consider the following 82-residue polypeptide: Small ribosomal subunit protein bS18 (82 aa).

Positions 1 to 20 (MVDINQIPTRRPFHRRRKTC) are disordered.

The protein belongs to the bacterial ribosomal protein bS18 family. In terms of assembly, part of the 30S ribosomal subunit. Forms a tight heterodimer with protein bS6.

Binds as a heterodimer with protein bS6 to the central domain of the 16S rRNA, where it helps stabilize the platform of the 30S subunit. This is Small ribosomal subunit protein bS18 from Brucella anthropi (strain ATCC 49188 / DSM 6882 / CCUG 24695 / JCM 21032 / LMG 3331 / NBRC 15819 / NCTC 12168 / Alc 37) (Ochrobactrum anthropi).